A 100-amino-acid polypeptide reads, in one-letter code: Urease subunit gamma (100 aa).

Belongs to the urease gamma subunit family. In terms of assembly, heterotrimer of UreA (gamma), UreB (beta) and UreC (alpha) subunits. Three heterotrimers associate to form the active enzyme.

Its subcellular location is the cytoplasm. It carries out the reaction urea + 2 H2O + H(+) = hydrogencarbonate + 2 NH4(+). It participates in nitrogen metabolism; urea degradation; CO(2) and NH(3) from urea (urease route): step 1/1. In Pseudomonas entomophila (strain L48), this protein is Urease subunit gamma.